Consider the following 340-residue polypeptide: Dihydroorotate dehydrogenase (quinone) (340 aa).

Residues 65–69 (AGLDK) and Thr89 each bind FMN. A substrate-binding site is contributed by Lys69. Position 114 to 118 (114 to 118 (NRMGF)) interacts with substrate. The FMN site is built by Asn142 and Asn175. Substrate is bound at residue Asn175. Ser178 acts as the Nucleophile in catalysis. Asn180 lines the substrate pocket. Lys220 and Thr248 together coordinate FMN. Residue 249-250 (NT) participates in substrate binding. Residues Gly271, Gly300, and 321 to 322 (YT) contribute to the FMN site.

It belongs to the dihydroorotate dehydrogenase family. Type 2 subfamily. Monomer. FMN is required as a cofactor.

The protein resides in the cell membrane. It carries out the reaction (S)-dihydroorotate + a quinone = orotate + a quinol. It functions in the pathway pyrimidine metabolism; UMP biosynthesis via de novo pathway; orotate from (S)-dihydroorotate (quinone route): step 1/1. In terms of biological role, catalyzes the conversion of dihydroorotate to orotate with quinone as electron acceptor. In Paraburkholderia xenovorans (strain LB400), this protein is Dihydroorotate dehydrogenase (quinone).